An 882-amino-acid chain; its full sequence is Cadherin-1 (882 aa).

The signal sequence occupies residues 1-23 (MGPWSRSLSALCCCCRCNPWLCR). Residues 24–154 (EPEPCIPGFG…PHHGLRRQKR (131 aa)) constitute a propeptide that is removed on maturation. Positions 117-137 (EVSAHHHHHHSHHDSPSGTQT) are disordered. Cadherin domains lie at 154 to 262 (RDWV…KPQF), 263 to 375 (TQEV…APRF), 376 to 486 (NPTT…APIF), 487 to 595 (VPPQ…GPVP), and 594 to 702 (VPEP…RPAE). Residues 155–709 (DWVIPPISCP…PAEAGLQVPA (555 aa)) lie on the Extracellular side of the membrane. Serine 280 carries O-linked (Man...) serine glycosylation. Residues threonine 285, threonine 358, threonine 470, threonine 472, and threonine 509 are each glycosylated (O-linked (Man...) threonine). N-linked (GlcNAc...) asparagine glycosylation occurs at asparagine 558. 3 O-linked (Man...) threonine glycosylation sites follow: threonine 576, threonine 578, and threonine 580. An N-linked (GlcNAc...) asparagine glycan is attached at asparagine 637. The chain crosses the membrane as a helical span at residues 710–730 (ILGILGGILAFLILILLLLLL). Residues 731–882 (VRRRRVVKEP…ADMYGGGEDD (152 aa)) lie on the Cytoplasmic side of the membrane. The interval 747-767 (DTRDNVYYYDEEGGGEEDQDF) is disordered. Phosphotyrosine; by SRC is present on residues tyrosine 753, tyrosine 754, and tyrosine 755. The segment covering 755-767 (YDEEGGGEEDQDF) has biased composition (acidic residues). A required for binding CTNND1 and PSEN1 region spans residues 758–769 (EGGGEEDQDFDL). 5 positions are modified to phosphoserine: serine 770, serine 793, serine 838, serine 840, and serine 846. The required for binding alpha, beta and gamma catenins stretch occupies residues 811–882 (IDENLKAADS…ADMYGGGEDD (72 aa)).

In terms of assembly, homodimer; disulfide-linked. Component of an E-cadherin/ catenin adhesion complex composed of at least E-cadherin/CDH1, beta-catenin/CTNNB1 or gamma-catenin/JUP, and potentially alpha-catenin/CTNNA1; the complex is located to adherens junctions. Found in a complex composed of CDH1, RAP1A and PKP3; PKP3 acts as a scaffold protein within the complex, the complex is required for CDH1 localization to mature desmosome cell junctions. Interacts with the TRPV4 and CTNNB1 complex. Interacts with CTNND1. The stable association of CTNNA1 is controversial as CTNNA1 was shown not to bind to F-actin when assembled in the complex. Alternatively, the CTNNA1-containing complex may be linked to F-actin by other proteins such as LIMA1. Interaction with PSEN1, cleaves CDH1 resulting in the disassociation of cadherin-based adherens junctions (CAJs). Interacts with AJAP1 and DLGAP5. Interacts with TBC1D2. Interacts with CAV1. Interacts with PIP5K1C. Interacts with RAB8B. Interacts with DDR1; this stabilizes CDH1 at the cell surface and inhibits its internalization. Interacts with RAPGEF2. Interacts with KLRG1. Forms a ternary complex composed of ADAM10, CADH1 and EPHA4; within the complex, CADH1 is cleaved by ADAM10 which disrupts adherens junctions. Interacts with SPEF1. Interacts with CTNNB1 and PKP2. Interacts with AMOTL2; the interaction may facilitate binding of radial actin fibers to cell junction complexes. Interacts with DSG3; the interaction is required for CDH1 localization to developing adherens junctions. Post-translationally, during apoptosis or with calcium influx, cleaved by a membrane-bound metalloproteinase (ADAM10), PS1/gamma-secretase and caspase-3. Processing by the metalloproteinase, induced by calcium influx, causes disruption of cell-cell adhesion and the subsequent release of beta-catenin into the cytoplasm. The residual membrane-tethered cleavage product is rapidly degraded via an intracellular proteolytic pathway. Cleavage by caspase-3 releases the cytoplasmic tail resulting in disintegration of the actin microfilament system. The gamma-secretase-mediated cleavage promotes disassembly of adherens junctions. During development of the cochlear organ of Corti, cleavage by ADAM10 at adherens junctions promotes pillar cell separation. N-glycosylation at Asn-637 is essential for expression, folding and trafficking. Addition of bisecting N-acetylglucosamine by MGAT3 modulates its cell membrane location. In terms of processing, ubiquitinated by a SCF complex containing SKP2, which requires prior phosphorylation by CK1/CSNK1A1. Ubiquitinated by CBLL1/HAKAI, requires prior phosphorylation at Tyr-754. Post-translationally, O-glycosylated. O-manosylated by TMTC1, TMTC2, TMTC3 or TMTC4. Thr-285 and Thr-509 are O-mannosylated by TMTC2 or TMTC4 but not TMTC1 or TMTC3.

The protein localises to the cell junction. It is found in the adherens junction. The protein resides in the cell membrane. Its subcellular location is the endosome. It localises to the golgi apparatus. The protein localises to the trans-Golgi network. It is found in the cytoplasm. The protein resides in the desmosome. In terms of biological role, cadherins are calcium-dependent cell adhesion proteins. They preferentially interact with themselves in a homophilic manner in connecting cells; cadherins may thus contribute to the sorting of heterogeneous cell types. CDH1 is involved in mechanisms regulating cell-cell adhesions, mobility and proliferation of epithelial cells. Promotes organization of radial actin fiber structure and cellular response to contractile forces, via its interaction with AMOTL2 which facilitates anchoring of radial actin fibers to CDH1 junction complexes at the cell membrane. Plays a role in the early stages of desmosome cell-cell junction formation via facilitating the recruitment of DSG2 and DSP to desmosome plaques. Has a potent invasive suppressor role. It is a ligand for integrin alpha-E/beta-7. E-Cad/CTF2 promotes non-amyloidogenic degradation of Abeta precursors. Has a strong inhibitory effect on APP C99 and C83 production. This Bos taurus (Bovine) protein is Cadherin-1 (CDH1).